The following is a 169-amino-acid chain: Nucleoside diphosphate kinase 3 (169 aa).

Positions 29, 105, 111, 122, 129, and 132 each coordinate ADP. The active-site Pros-phosphohistidine intermediate is the H135.

It belongs to the NDK family. In terms of assembly, homohexamer. Interacts (via its N-terminal region) with KAT5; this interaction enables recruitment of NME3 at DNA damage sites where it plays a role in the repair of DNA. Found in association with several ciliary nephronophthisis proteins, including NEK8, CEP164, ANKS6. Requires Mg(2+) as cofactor.

It localises to the mitochondrion outer membrane. It is found in the cytoplasm. Its subcellular location is the cytoskeleton. The protein resides in the cilium basal body. The enzyme catalyses a 2'-deoxyribonucleoside 5'-diphosphate + ATP = a 2'-deoxyribonucleoside 5'-triphosphate + ADP. It catalyses the reaction a ribonucleoside 5'-diphosphate + ATP = a ribonucleoside 5'-triphosphate + ADP. Functionally, catalyzes the phosphorylation of ribonucleosides and deoxyribonucleoside diphosphates, other than ATP, into the corresponding triphosphates with ATP as the major phosphate donor. The ATP gamma phosphate is transferred to the nucleoside diphosphate beta phosphate via a ping-pong mechanism, using a phosphorylated active-site intermediate. Through the catalyzed exchange of gamma-phosphate between di- and triphosphonucleosides participates in regulation of intracellular nucleotide homeostasis. Inhibits granulocyte differentiation. May be required for ciliary function during renal development. Its function is as follows. Independently of its kinase activity, facilitates mitochondrial tethering prior to membrane fusion through its direct membrane-binding and hexamerization. Implicated in repair of both single- and double-stranded breaks in DNA through its association with the ribonucleotide reductase complex (RNR complex) via its interaction with the histone acetyltransferase KAT5, this interaction enables recruitment of NME3 at DNA damage sites where it plays a role in the repair of DNA, independently of its kinase activity. The chain is Nucleoside diphosphate kinase 3 (Nme3) from Mus musculus (Mouse).